The chain runs to 249 residues: Indole-3-glycerol phosphate synthase (249 aa).

Belongs to the TrpC family.

It catalyses the reaction 1-(2-carboxyphenylamino)-1-deoxy-D-ribulose 5-phosphate + H(+) = (1S,2R)-1-C-(indol-3-yl)glycerol 3-phosphate + CO2 + H2O. The protein operates within amino-acid biosynthesis; L-tryptophan biosynthesis; L-tryptophan from chorismate: step 4/5. The polypeptide is Indole-3-glycerol phosphate synthase (Pyrobaculum neutrophilum (strain DSM 2338 / JCM 9278 / NBRC 100436 / V24Sta) (Thermoproteus neutrophilus)).